Consider the following 65-residue polypeptide: MKEIIKFRKKNRQDLNIELLQLLREQFNLRMQSASGKLKQPHLLRKVRKNIAQVKMLLKEKECVK.

The protein belongs to the universal ribosomal protein uL29 family.

This Buchnera aphidicola subsp. Schizaphis graminum (strain Sg) protein is Large ribosomal subunit protein uL29.